Consider the following 591-residue polypeptide: V-type ATP synthase alpha chain (591 aa).

233–240 serves as a coordination point for ATP; that stretch reads GPFGAGKT.

It belongs to the ATPase alpha/beta chains family.

It catalyses the reaction ATP + H2O + 4 H(+)(in) = ADP + phosphate + 5 H(+)(out). Produces ATP from ADP in the presence of a proton gradient across the membrane. The V-type alpha chain is a catalytic subunit. The polypeptide is V-type ATP synthase alpha chain (Streptococcus pyogenes serotype M18 (strain MGAS8232)).